The primary structure comprises 392 residues: Formate-dependent phosphoribosylglycinamide formyltransferase (392 aa).

N(1)-(5-phospho-beta-D-ribosyl)glycinamide-binding positions include glutamate 22–leucine 23 and glutamate 82. ATP is bound by residues arginine 114, lysine 155, serine 160–glutamine 165, glutamate 195–valine 198, and glutamate 203. One can recognise an ATP-grasp domain in the interval arginine 119–leucine 308. Glutamate 267 and glutamate 279 together coordinate Mg(2+). Residues aspartate 286, lysine 355, and arginine 362–arginine 363 contribute to the N(1)-(5-phospho-beta-D-ribosyl)glycinamide site.

It belongs to the PurK/PurT family. Homodimer.

It carries out the reaction N(1)-(5-phospho-beta-D-ribosyl)glycinamide + formate + ATP = N(2)-formyl-N(1)-(5-phospho-beta-D-ribosyl)glycinamide + ADP + phosphate + H(+). The protein operates within purine metabolism; IMP biosynthesis via de novo pathway; N(2)-formyl-N(1)-(5-phospho-D-ribosyl)glycinamide from N(1)-(5-phospho-D-ribosyl)glycinamide (formate route): step 1/1. Its function is as follows. Involved in the de novo purine biosynthesis. Catalyzes the transfer of formate to 5-phospho-ribosyl-glycinamide (GAR), producing 5-phospho-ribosyl-N-formylglycinamide (FGAR). Formate is provided by PurU via hydrolysis of 10-formyl-tetrahydrofolate. The chain is Formate-dependent phosphoribosylglycinamide formyltransferase from Salmonella arizonae (strain ATCC BAA-731 / CDC346-86 / RSK2980).